A 92-amino-acid polypeptide reads, in one-letter code: Integration host factor subunit beta (92 aa).

Belongs to the bacterial histone-like protein family. In terms of assembly, heterodimer of an alpha and a beta chain.

This protein is one of the two subunits of integration host factor, a specific DNA-binding protein that functions in genetic recombination as well as in transcriptional and translational control. The polypeptide is Integration host factor subunit beta (Vibrio cholerae serotype O1 (strain ATCC 39541 / Classical Ogawa 395 / O395)).